The chain runs to 229 residues: Potassium/proton antiporter CemA (229 aa).

3 helical membrane-spanning segments follow: residues 7-27 (LTPLPYLASIVFLPWWISISF), 106-126 (IILHFSTNIICFAILSGYSIL), and 189-209 (IISGLVSTFPVILDTILKYWI).

Belongs to the CemA family.

It is found in the plastid. The protein resides in the chloroplast inner membrane. It carries out the reaction K(+)(in) + H(+)(out) = K(+)(out) + H(+)(in). In terms of biological role, contributes to K(+)/H(+) antiport activity by supporting proton efflux to control proton extrusion and homeostasis in chloroplasts in a light-dependent manner to modulate photosynthesis. Prevents excessive induction of non-photochemical quenching (NPQ) under continuous-light conditions. Indirectly promotes efficient inorganic carbon uptake into chloroplasts. The chain is Potassium/proton antiporter CemA from Liriodendron tulipifera (Tuliptree).